Consider the following 644-residue polypeptide: Exoribonuclease 2 (644 aa).

The region spanning 189–516 (RQDLTALNFV…NHRLLKAVIK (328 aa)) is the RNB domain. The region spanning 561-643 (NTRFAAEIID…ETRSIIARPA (83 aa)) is the S1 motif domain.

The protein belongs to the RNR ribonuclease family. RNase II subfamily.

It is found in the cytoplasm. It carries out the reaction Exonucleolytic cleavage in the 3'- to 5'-direction to yield nucleoside 5'-phosphates.. Its function is as follows. Involved in mRNA degradation. Hydrolyzes single-stranded polyribonucleotides processively in the 3' to 5' direction. The sequence is that of Exoribonuclease 2 from Salmonella paratyphi A (strain ATCC 9150 / SARB42).